Reading from the N-terminus, the 204-residue chain is Large ribosomal subunit protein bL17 (204 aa).

Residues 124–204 are disordered; it reads QAVGEAERAR…DDDGPAESKS (81 aa). Positions 128 to 142 are enriched in basic and acidic residues; that stretch reads EAERARGTRFSERRK. The segment covering 156–191 has biased composition (low complexity); that stretch reads SESPTAAAVAAQSAEEQAPVEETLTAQAAETSAATV. Over residues 192–204 the composition is skewed to acidic residues; sequence EETDDDGPAESKS.

It belongs to the bacterial ribosomal protein bL17 family. In terms of assembly, part of the 50S ribosomal subunit. Contacts protein L32.

This Frankia alni (strain DSM 45986 / CECT 9034 / ACN14a) protein is Large ribosomal subunit protein bL17.